The sequence spans 940 residues: Isoleucine--tRNA ligase (940 aa).

Positions 58 to 68 match the 'HIGH' region motif; it reads PYANGSIHIGH. Glu-564 lines the L-isoleucyl-5'-AMP pocket. Positions 605-609 match the 'KMSKS' region motif; the sequence is KMSKS. Lys-608 is an ATP binding site. Cys-903, Cys-906, Cys-923, and Cys-926 together coordinate Zn(2+).

It belongs to the class-I aminoacyl-tRNA synthetase family. IleS type 1 subfamily. Monomer. Zn(2+) serves as cofactor.

The protein resides in the cytoplasm. The catalysed reaction is tRNA(Ile) + L-isoleucine + ATP = L-isoleucyl-tRNA(Ile) + AMP + diphosphate. In terms of biological role, catalyzes the attachment of isoleucine to tRNA(Ile). As IleRS can inadvertently accommodate and process structurally similar amino acids such as valine, to avoid such errors it has two additional distinct tRNA(Ile)-dependent editing activities. One activity is designated as 'pretransfer' editing and involves the hydrolysis of activated Val-AMP. The other activity is designated 'posttransfer' editing and involves deacylation of mischarged Val-tRNA(Ile). The polypeptide is Isoleucine--tRNA ligase (Shewanella sediminis (strain HAW-EB3)).